We begin with the raw amino-acid sequence, 339 residues long: NADP-dependent dehydrogenase M3 (339 aa).

7 residues coordinate NADP(+): S49, I51, D93, Y206, K210, I240, and Q244. The active-site Proton acceptor is Y206. K210 functions as the Lowers pKa of active site Tyr in the catalytic mechanism.

It belongs to the short-chain dehydrogenases/reductases (SDR) family. As to quaternary structure, homodimer.

The protein resides in the cytoplasm. It is found in the cytosol. Its pathway is secondary metabolite biosynthesis. NADP-dependent dehydrogenase; part of the gene cluster that mediates the biosynthesis of squalestatin S1 (SQS1, also known as zaragozic acid A), a heavily oxidized fungal polyketide that offers potent cholesterol lowering activity by targeting squalene synthase (SS). SQS1 is composed of a 2,8-dioxobicyclic[3.2.1]octane-3,4,5-tricarboxyclic acid core that is connected to two lipophilic polyketide arms. These initial steps feature the priming of an unusual benzoic acid starter unit onto the highly reducing polyketide synthase pks2, followed by oxaloacetate extension and product release to generate a tricarboxylic acid containing product. The phenylalanine ammonia lyase (PAL) M7 and the acyl-CoA ligase M9 are involved in transforming phenylalanine into benzoyl-CoA. The citrate synthase-like protein R3 is involved in connecting the C-alpha-carbons of the hexaketide chain and oxaloacetate to afford the tricarboxylic acid unit. The potential hydrolytic enzymes, M8 and M10, are in close proximity to pks2 and may participate in product release. On the other side, the tetraketide arm is synthesized by a the squalestatin tetraketide synthase pks1 and enzymatically esterified to the core in the last biosynthetic step, by the acetyltransferase M4. The biosynthesis of the tetraketide must involve 3 rounds of chain extension. After the first and second rounds methyl-transfer occurs, and in all rounds of extension the ketoreductase and dehydratase are active. The enoyl reductase and C-MeT of pks1 are not active in the final round of extension. The acetyltransferase M4 appears to have a broad substrate selectivity for its acyl CoA substrate, allowing the in vitro synthesis of novel squalestatins. The biosynthesis of SQS1 requires several oxidative steps likely performed by oxidoreductases M1, R1 and R2. Finally, in support of the identification of the cluster as being responsible for SQS1 production, the cluster contains a gene encoding a putative squalene synthase (SS) R6, suggesting a likely mechanism for self-resistance. The chain is NADP-dependent dehydrogenase M3 from Phoma sp. (strain ATCC 20986 / MF5453).